Consider the following 115-residue polypeptide: Probable K(+)/H(+) antiporter subunit C (115 aa).

3 helical membrane-spanning segments follow: residues 4–21 (ILSA…YLLL), 28–47 (VIIG…FGMG), and 75–97 (ALVL…VLLA).

It belongs to the CPA3 antiporters (TC 2.A.63) subunit C family. In terms of assembly, may form a hetero-oligomeric complex that consists of six subunits: PhaAB, PhaC, PhaD, PhaE, PhaF and PhaG.

It is found in the cell membrane. In terms of biological role, part of a K(+) efflux system which is required for the adaptation of R.meliloti to alkaline pH as well as for the infection process during symbiotic nodule development. This chain is Probable K(+)/H(+) antiporter subunit C (phaC), found in Rhizobium meliloti (strain 1021) (Ensifer meliloti).